The following is a 491-amino-acid chain: 2,3-bisphosphoglycerate-independent phosphoglycerate mutase (491 aa).

The Mn(2+) site is built by aspartate 11 and serine 61. Serine 61 acts as the Phosphoserine intermediate in catalysis. Residues histidine 118, 147-148 (RD), arginine 177, arginine 183, 247-250 (RNDR), and lysine 320 each bind substrate. Positions 386, 390, 427, 428, and 445 each coordinate Mn(2+).

Belongs to the BPG-independent phosphoglycerate mutase family. As to quaternary structure, monomer. The cofactor is Mn(2+).

It carries out the reaction (2R)-2-phosphoglycerate = (2R)-3-phosphoglycerate. The protein operates within carbohydrate degradation; glycolysis; pyruvate from D-glyceraldehyde 3-phosphate: step 3/5. Functionally, catalyzes the interconversion of 2-phosphoglycerate and 3-phosphoglycerate. The protein is 2,3-bisphosphoglycerate-independent phosphoglycerate mutase of Helicobacter pylori (strain ATCC 700392 / 26695) (Campylobacter pylori).